A 90-amino-acid chain; its full sequence is Small ribosomal subunit protein uS15c (90 aa).

This sequence belongs to the universal ribosomal protein uS15 family. Part of the 30S ribosomal subunit.

Its subcellular location is the plastid. It localises to the chloroplast. This is Small ribosomal subunit protein uS15c (rps15) from Platanus occidentalis (Sycamore).